A 320-amino-acid polypeptide reads, in one-letter code: MRSAQVYRWQIPMDAGVVLRDRRLKTRDGLYVCLRDGEREGWGEISPLPGFSQETWEEAQTALLTWVNDWLQGSEGLPEMPSVAFGASCALAELTGVLPEAADYRAAPLCTGDPDDLVLRLADMPGEKIAKVKVGLYEAVRDGMVVNLLLEAIPDLHLRLDANRAWTPLKAQQFAKYVNPDYRARIAFLEEPCKTRDDSRAFARETGIAIAWDESLREADFTFEAEEGVRAVVIKPTLTGSLDKVREQVAAAHALGLTAVISSSIESSLGLTQLARIAAWLTPGTLPGLDTLHLMQAQQIRPWPGSALPCLKREELERLL.

Lys-133 (proton donor) is an active-site residue. Positions 161, 190, and 213 each coordinate Mg(2+). Lys-235 acts as the Proton acceptor in catalysis.

This sequence belongs to the mandelate racemase/muconate lactonizing enzyme family. MenC type 1 subfamily. Requires a divalent metal cation as cofactor.

It carries out the reaction (1R,6R)-6-hydroxy-2-succinyl-cyclohexa-2,4-diene-1-carboxylate = 2-succinylbenzoate + H2O. The protein operates within quinol/quinone metabolism; 1,4-dihydroxy-2-naphthoate biosynthesis; 1,4-dihydroxy-2-naphthoate from chorismate: step 4/7. Its pathway is quinol/quinone metabolism; menaquinone biosynthesis. In terms of biological role, converts 2-succinyl-6-hydroxy-2,4-cyclohexadiene-1-carboxylate (SHCHC) to 2-succinylbenzoate (OSB). The protein is o-succinylbenzoate synthase of Salmonella choleraesuis (strain SC-B67).